Reading from the N-terminus, the 153-residue chain is Actin-related protein 2/3 complex subunit 5-like protein (153 aa).

At S64 the chain carries Phosphoserine.

This sequence belongs to the ARPC5 family. May be a component of the Arp2/3 complex in which it may replace ARPC5.

The protein localises to the cytoplasm. The protein resides in the cytoskeleton. It localises to the cell projection. In terms of biological role, may function as component of the Arp2/3 complex which is involved in regulation of actin polymerization and together with an activating nucleation-promoting factor (NPF) mediates the formation of branched actin networks. This is Actin-related protein 2/3 complex subunit 5-like protein (ARPC5L) from Bos taurus (Bovine).